Consider the following 175-residue polypeptide: MLRIAVTGSPGVGKSTVVAKTAEKLAEKPGFKIGGIRTAEIRKEGHREGFSIRDLATGKTGILSHVKGSGPRLGKYHVNLDDLERIGANAVRNALACDLVVIDEIGPMELISQSFVSAVEEVLESDKPVLAVLHHSSRHPLAQRFRKGFEVLTVDKGNRDELPEKITNRFLRKLG.

Residues 8-15 and 99-106 contribute to the ATP site; these read GSPGVGKS and LVVIDEIG.

It belongs to the THEP1 NTPase family.

It catalyses the reaction a ribonucleoside 5'-triphosphate + H2O = a ribonucleoside 5'-diphosphate + phosphate + H(+). Has nucleotide phosphatase activity towards ATP, GTP, CTP, TTP and UTP. May hydrolyze nucleoside diphosphates with lower efficiency. This Methanosarcina acetivorans (strain ATCC 35395 / DSM 2834 / JCM 12185 / C2A) protein is Nucleoside-triphosphatase THEP1.